The following is a 229-amino-acid chain: Lipoprotein-releasing system ATP-binding protein LolD (229 aa).

An ABC transporter domain is found at 7–229 (LKCKNVTKTY…KNGKLYKKNL (223 aa)). ATP is bound at residue 43-50 (GDSGSGKS).

It belongs to the ABC transporter superfamily. Lipoprotein translocase (TC 3.A.1.125) family. The complex is composed of two ATP-binding proteins (LolD) and two transmembrane proteins (LolC and LolE).

It localises to the cell membrane. In terms of biological role, part of the ABC transporter complex LolCDE involved in the translocation of lipoproteins, in an ATP-dependent manner. This Wigglesworthia glossinidia brevipalpis protein is Lipoprotein-releasing system ATP-binding protein LolD.